Here is a 30-residue protein sequence, read N- to C-terminus: Photosystem I reaction center subunit XII (30 aa).

The helical transmembrane segment at 7–29 threads the bilayer; sequence VYTVLLIALLASVLAIRLGSTLY.

The protein belongs to the PsaM family.

The protein localises to the plastid. Its subcellular location is the chloroplast thylakoid membrane. The polypeptide is Photosystem I reaction center subunit XII (Trieres chinensis (Marine centric diatom)).